The sequence spans 153 residues: T cell receptor delta constant (153 aa).

Asn14 carries an N-linked (GlcNAc...) asparagine glycan. Cys20 and Cys71 are disulfide-bonded. The N-linked (GlcNAc...) asparagine glycan is linked to Asn77. Over residues 85-102 (FEVKTDSTDHVKPKETEN) the composition is skewed to basic and acidic residues. Residues 85–112 (FEVKTDSTDHVKPKETENTKQPSKSCHK) form a disordered region. A helical transmembrane segment spans residues 130–152 (LGLRMLFAKTVAVNFLLTAKLFF).

Gamma-delta TR is a heterodimer composed of a gamma and delta chain; disulfide-linked. The gamma-delta TR is associated with the transmembrane signaling CD3 coreceptor proteins following the stoichiometry: a single gamma-delta TR heterodimer associates with one CD3D-CD3E heterodimer, one CD3G-CD3E heterodimer and one CD247 homodimer forming a stable octameric structure. Upon activation, gamma-delta TR complex associates with FCER1G to initiate intracellular signaling.

The protein resides in the cell membrane. Its function is as follows. Constant region of T cell receptor (TR) delta chain that participates in the antigen recognition. Gamma-delta TRs recognize a variety of self and foreign non-peptide antigens frequently expressed at the epithelial boundaries between the host and external environment, including endogenous lipids presented by MH-like protein CD1D and phosphoantigens presented by butyrophilin-like molecule BTN3A1. Upon antigen recognition induces rapid, innate-like immune responses involved in pathogen clearance and tissue repair. Binding of gamma-delta TR complex to antigen triggers phosphorylation of immunoreceptor tyrosine-based activation motifs (ITAMs) in the CD3 chains by the LCK and FYN kinases, allowing the recruitment, phosphorylation, and activation of ZAP70 that facilitates phosphorylation of the scaffolding proteins LCP2 and LAT. This lead to the formation of a supramolecular signalosome that recruits the phospholipase PLCG1, resulting in calcium mobilization and ERK activation, ultimately leading to T cell expansion and differentiation into effector cells. Gamma-delta TRs are produced through somatic rearrangement of a limited repertoire of variable (V), diversity (D), and joining (J) genes. The potential diversity of gamma-delta TRs is conferred by the unique ability to rearrange (D) genes in tandem and to utilize all three reading frames. The combinatorial diversity is considerably increased by the sequence exonuclease trimming and random nucleotide (N) region additions which occur during the V-(D)-J rearrangements. This is T cell receptor delta constant from Homo sapiens (Human).